The following is a 623-amino-acid chain: Adenine deaminase 2 (623 aa).

Belongs to the metallo-dependent hydrolases superfamily. Adenine deaminase family. The cofactor is Mn(2+).

The enzyme catalyses adenine + H2O + H(+) = hypoxanthine + NH4(+). The chain is Adenine deaminase 2 from Jannaschia sp. (strain CCS1).